The following is a 177-amino-acid chain: Large ribosomal subunit protein uL6 (177 aa).

The protein belongs to the universal ribosomal protein uL6 family. Part of the 50S ribosomal subunit.

This protein binds to the 23S rRNA, and is important in its secondary structure. It is located near the subunit interface in the base of the L7/L12 stalk, and near the tRNA binding site of the peptidyltransferase center. The polypeptide is Large ribosomal subunit protein uL6 (Methanothermobacter thermautotrophicus (strain ATCC 29096 / DSM 1053 / JCM 10044 / NBRC 100330 / Delta H) (Methanobacterium thermoautotrophicum)).